The chain runs to 227 residues: Cytochrome c oxidase subunit 2 (227 aa).

Residues 1 to 14 (MAYPLQMGLQDATS) lie on the Mitochondrial intermembrane side of the membrane. Residues 15–45 (PIMEELLHFHDHTLMIVFLISSLVLYIISLM) traverse the membrane as a helical segment. At 46 to 59 (LTTKLTHTSTMDAQ) the chain is on the mitochondrial matrix side. The helical transmembrane segment at 60 to 87 (EVETVWTILPAIILILIALPSLRILYMM) threads the bilayer. Topologically, residues 88–227 (DEINNPSLTV…HFEKWSTSML (140 aa)) are mitochondrial intermembrane. The Cu cation site is built by histidine 161, cysteine 196, glutamate 198, cysteine 200, histidine 204, and methionine 207. Glutamate 198 is a Mg(2+) binding site.

The protein belongs to the cytochrome c oxidase subunit 2 family. In terms of assembly, component of the cytochrome c oxidase (complex IV, CIV), a multisubunit enzyme composed of 14 subunits. The complex is composed of a catalytic core of 3 subunits MT-CO1, MT-CO2 and MT-CO3, encoded in the mitochondrial DNA, and 11 supernumerary subunits COX4I, COX5A, COX5B, COX6A, COX6B, COX6C, COX7A, COX7B, COX7C, COX8 and NDUFA4, which are encoded in the nuclear genome. The complex exists as a monomer or a dimer and forms supercomplexes (SCs) in the inner mitochondrial membrane with NADH-ubiquinone oxidoreductase (complex I, CI) and ubiquinol-cytochrome c oxidoreductase (cytochrome b-c1 complex, complex III, CIII), resulting in different assemblies (supercomplex SCI(1)III(2)IV(1) and megacomplex MCI(2)III(2)IV(2)). Found in a complex with TMEM177, COA6, COX18, COX20, SCO1 and SCO2. Interacts with TMEM177 in a COX20-dependent manner. Interacts with COX20. Interacts with COX16. It depends on Cu cation as a cofactor.

The protein resides in the mitochondrion inner membrane. It catalyses the reaction 4 Fe(II)-[cytochrome c] + O2 + 8 H(+)(in) = 4 Fe(III)-[cytochrome c] + 2 H2O + 4 H(+)(out). Functionally, component of the cytochrome c oxidase, the last enzyme in the mitochondrial electron transport chain which drives oxidative phosphorylation. The respiratory chain contains 3 multisubunit complexes succinate dehydrogenase (complex II, CII), ubiquinol-cytochrome c oxidoreductase (cytochrome b-c1 complex, complex III, CIII) and cytochrome c oxidase (complex IV, CIV), that cooperate to transfer electrons derived from NADH and succinate to molecular oxygen, creating an electrochemical gradient over the inner membrane that drives transmembrane transport and the ATP synthase. Cytochrome c oxidase is the component of the respiratory chain that catalyzes the reduction of oxygen to water. Electrons originating from reduced cytochrome c in the intermembrane space (IMS) are transferred via the dinuclear copper A center (CU(A)) of subunit 2 and heme A of subunit 1 to the active site in subunit 1, a binuclear center (BNC) formed by heme A3 and copper B (CU(B)). The BNC reduces molecular oxygen to 2 water molecules using 4 electrons from cytochrome c in the IMS and 4 protons from the mitochondrial matrix. In Phoca vitulina (Harbor seal), this protein is Cytochrome c oxidase subunit 2 (MT-CO2).